Here is a 90-residue protein sequence, read N- to C-terminus: Serine protease inhibitor Cvsi-1 (90 aa).

An N-terminal signal peptide occupies residues 1–19 (MDVVRTLILCVCLFGLTFA).

In terms of processing, contains 6 disulfide bonds. In terms of tissue distribution, detected in hemolymph (at protein level). In oysters collected in the summer the expression level is highest in the digestive gland with low levels of expression in gill, mantle, labial palp, style-sac midgut, gonad, heart, and hemocyte. In winter expression levels are higher in all tissues with highest expression levels observed in the digestive gland. Within the digestive gland expression is limited to the basophil cells of the digestive diverticula.

It is found in the secreted. Functionally, slow-binding inhibitor of serine proteases. The inhibitor rapidly binds to the protease forming a weak enzyme-inhibitor complex, and this is followed by a slow isomerization forming a tight-binding enzyme-inhibitor complex. Active against subtilisin A, perkinsin and trypsin with dissociation constants of 0.29 nM, 13.7 nM and 17.7 nM respectively. Not active against thermolysin, papain or pepsin. Has antiparasitic activity against the protozoan P.marinus. The chain is Serine protease inhibitor Cvsi-1 from Crassostrea virginica (Eastern oyster).